Consider the following 211-residue polypeptide: uncharacterized protein (211 aa).

4 helical membrane-spanning segments follow: residues 77–97, 113–133, 152–172, and 179–199; these read FLMF…AITI, GISV…VLIG, ILIS…NVIP, and LLTP…PLFG.

It localises to the cell membrane. This is an uncharacterized protein from Bacillus subtilis (strain 168).